Reading from the N-terminus, the 222-residue chain is 7-cyano-7-deazaguanine synthase (222 aa).

Residue Phe-14–Leu-24 participates in ATP binding. Cys-190, Cys-199, Cys-202, and Cys-205 together coordinate Zn(2+).

The protein belongs to the QueC family. Homodimer. It depends on Zn(2+) as a cofactor.

It carries out the reaction 7-carboxy-7-deazaguanine + NH4(+) + ATP = 7-cyano-7-deazaguanine + ADP + phosphate + H2O + H(+). The protein operates within purine metabolism; 7-cyano-7-deazaguanine biosynthesis. In terms of biological role, catalyzes the ATP-dependent conversion of 7-carboxy-7-deazaguanine (CDG) to 7-cyano-7-deazaguanine (preQ(0)). This Staphylococcus aureus (strain bovine RF122 / ET3-1) protein is 7-cyano-7-deazaguanine synthase.